Here is a 106-residue protein sequence, read N- to C-terminus: UPF0145 protein VV2_1464 (106 aa).

The protein belongs to the UPF0145 family.

In Vibrio vulnificus (strain CMCP6), this protein is UPF0145 protein VV2_1464.